A 496-amino-acid chain; its full sequence is Glutamate--tRNA ligase (496 aa).

The 'HIGH' region signature appears at 12–22; sequence PSPTGHLHIGN. The 'KMSKS' region motif lies at 259-263; it reads KLSKR. Lys262 contacts ATP.

It belongs to the class-I aminoacyl-tRNA synthetase family. Glutamate--tRNA ligase type 1 subfamily. As to quaternary structure, monomer.

The protein resides in the cytoplasm. The enzyme catalyses tRNA(Glu) + L-glutamate + ATP = L-glutamyl-tRNA(Glu) + AMP + diphosphate. Catalyzes the attachment of glutamate to tRNA(Glu) in a two-step reaction: glutamate is first activated by ATP to form Glu-AMP and then transferred to the acceptor end of tRNA(Glu). The polypeptide is Glutamate--tRNA ligase (Lactiplantibacillus plantarum (strain ATCC BAA-793 / NCIMB 8826 / WCFS1) (Lactobacillus plantarum)).